We begin with the raw amino-acid sequence, 539 residues long: Sodium/hydrogen exchanger 9B2 (539 aa).

Over 1–94 (MEDSLFSVDK…ACPPQGCFSL (94 aa)) the chain is Cytoplasmic. A helical membrane pass occupies residues 95 to 112 (AITNVTMVILIWAVVWSI). Residues 113-121 (TGPECLPGG) lie on the Extracellular side of the membrane. Residues 122-141 (NLFGILALLFSAALGGKLIS) form a helical membrane-spanning segment. Over 142 to 152 (LIKIPSLPPLP) the chain is Cytoplasmic. A helical membrane pass occupies residues 153 to 169 (PLLGMLLAGFLIRNIPV). Residues 170 to 179 (ITDQVQIHHK) are Extracellular-facing. Residues 180 to 197 (WSAALRNIALAIILVRAG) traverse the membrane as a helical segment. The Cytoplasmic portion of the chain corresponds to 198–208 (LGLDPKALRKL). Residues 209 to 235 (KAVCLRLSFGPCVVESCTAAVVSHFIM) form a helical membrane-spanning segment. The Extracellular segment spans residues 236-241 (GFPLTW). A helical membrane pass occupies residues 242–250 (GFMLGFVLG). Over 251–278 (AVSPAVVVPSMLILQKEGFGVDKGIPTL) the chain is Cytoplasmic. Residues V252, G283, D286, and D287 each coordinate Na(+). The helical transmembrane segment at 279–298 (LMAAGSFDDVLAITGFNTCL) threads the bilayer. Topologically, residues 299-308 (GMAFSSGSTL) are extracellular. The chain crosses the membrane as a helical span at residues 309–332 (NTIVRGVLEVVVGIAAGLLFGFFL). Topologically, residues 333–347 (HYFPSKDQENLKGKR) are cytoplasmic. A helical transmembrane segment spans residues 348 to 365 (SYLILALSVFAVFGSLYF). The Extracellular portion of the chain corresponds to 366–369 (GFPG). The helical transmembrane segment at 370 to 381 (SGGLCTLVMAFL) threads the bilayer. At 382–398 (AGIGWSTDKTVVEDIIA) the chain is on the cytoplasmic side. A helical membrane pass occupies residues 399–419 (VSWDIFQPLLFGLIGAEISVA). Residues 420-425 (SLKPET) are Extracellular-facing. Residues 426–448 (VGLCTATLIIALIIRICISFLMV) traverse the membrane as a helical segment. Topologically, residues 449 to 469 (CFSGFSLKEKIFISLAWMPKA) are cytoplasmic. A helical membrane pass occupies residues 470 to 481 (TVQAAIGSVALD). Residues 482–494 (TARTLENKQFEDY) lie on the Extracellular side of the membrane. The chain crosses the membrane as a helical span at residues 495 to 517 (GMDVLTVAFLGILVTAPIGALVI). Over 518–539 (GLTGPKMLEKSESRTVTEEGSV) the chain is Cytoplasmic.

This sequence belongs to the monovalent cation:proton antiporter 1 (CPA1) transporter (TC 2.A.36) family. In terms of assembly, homodimer; dimerization is essential for SLC9B2 activity. Lipids seem to play a role in the stabilization of the dimerization subdomain.

The protein localises to the cell membrane. It is found in the mitochondrion membrane. It localises to the endosome membrane. Its subcellular location is the recycling endosome membrane. The protein resides in the cytoplasmic vesicle. The protein localises to the secretory vesicle. It is found in the synaptic vesicle membrane. It localises to the basolateral cell membrane. Its subcellular location is the apical cell membrane. It catalyses the reaction Li(+)(out) + H(+)(in) = Li(+)(in) + H(+)(out). It carries out the reaction Li(+)(in) + Na(+)(out) = Li(+)(out) + Na(+)(in). The enzyme catalyses Na(+)(in) + H(+)(out) = Na(+)(out) + H(+)(in). Its activity is regulated as follows. Allosterically inhibited by the N-terminal domain. Inhibited by phloretin. Electroneutral Na(+) Li(+)/H(+) antiporter that extrudes Na(+) or Li(+) in exchange for external protons across the membrane. Uses the proton gradient/membrane potential to extrude sodium. Contributes to the regulation of intracellular pH and sodium homeostasis. Also able to mediate Na(+)/Li(+) antiporter activity in kidney. The protein is Sodium/hydrogen exchanger 9B2 (slc9b2) of Xenopus tropicalis (Western clawed frog).